Reading from the N-terminus, the 135-residue chain is Small ribosomal subunit protein uS9 (135 aa).

It belongs to the universal ribosomal protein uS9 family.

This chain is Small ribosomal subunit protein uS9 (rps9), found in Archaeoglobus fulgidus (strain ATCC 49558 / DSM 4304 / JCM 9628 / NBRC 100126 / VC-16).